We begin with the raw amino-acid sequence, 524 residues long: MRRWLVASMAPQLHQLLQPVRRCHHPLRIPSVQLAAPRSHTHEDIAYASCPACSRVVHMCDMLTHLITAHRELDQTHCRKMCTERLALYERVIGVPLKKSELTSSGRRVLDFLPTVLPTGYMCNWCDRRSDVYATRDKFLKHVADVHTDIDLEEVEPHVPLPPRGVVVEKSNGDGGPQPTRRLNGVVAVAEKSEPINAVPRILGISLPRGVDRPLKATAQFSDTEFPCELCNRTFNSEIDLLQHLETRHPDGTAEGPAGVDSAAIADVAQFSAKEATTGGDQRVHVICDLCVSSSKVYKMPSALFSHIRFKHPNEDAAFHVERLIREQKTVSSFVCTVCQKAFASAAALDGHFNSKHAEQGEAQNVVGRVTANNCWWCHDCEKGFSSAKGLHGHMQNKHGLSSQTHPCPACKRVFADIYSLEEHLSLQHKTIRLSDIGLLTHVKCSTCERFFLSHEDLHRHAVKHHKKDPRAPAQPFEAPTSASHVAASTSAAVPSEVEATASPQGPRKVKKRKKTTEVSEVTS.

The N-terminal 22 residues, 1-22, are a transit peptide targeting the mitochondrion; that stretch reads MRRWLVASMAPQLHQLLQPVRR. The segment at 48-70 adopts a C2H2-type 1; atypical zinc-finger fold; sequence ASCPACSRVVHMCDMLTHLITAH. The C2H2-type 2; atypical zinc-finger motif lies at 121-147; it reads YMCNWCDRRSDVYATRDKFLKHVADVH. The C2H2-type 4 zinc finger occupies 226 to 249; it reads FPCELCNRTFNSEIDLLQHLETRH. The C2H2-type 3; atypical zinc finger occupies 286–312; it reads VICDLCVSSSKVYKMPSALFSHIRFKH. 4 C2H2-type zinc fingers span residues 334 to 357, 376 to 399, 406 to 429, and 443 to 465; these read FVCT…NSKH, WWCH…QNKH, HPCP…SLQH, and VKCS…AVKH. The tract at residues 463–524 is disordered; the sequence is VKHHKKDPRA…KTTEVSEVTS (62 aa). Over residues 479–500 the composition is skewed to low complexity; it reads APTSASHVAASTSAAVPSEVEA.

Component of the REH2-associated complex (REH2C) composed of helicase REH2, associated factors H2F1 and H2F2, and mRNAs at various editing stages; the formation of the complex is RNA-independent. Within the complex, interacts with REH2; the interaction is direct. Interacts with various editing complexes including the RNA editing core (RECC) complex, the gRNA-binding (GRBC) complex (also known as the MRB1 complex) and the RNA editing mediator (REMC) complex.

Its subcellular location is the mitochondrion. Its function is as follows. Plays an important role in mitochondrial mRNA editing by promoting the assembly of the mRNA editosome. Facilitates the recruitment of mRNA to the REH2C complex and promotes the interaction between various editing complexes including REH2C, GRBC, REMC and RECC complexes. The polypeptide is REH2-associated factor 1 (Trypanosoma brucei brucei (strain 927/4 GUTat10.1)).